The following is an 82-amino-acid chain: Costars family protein v1g158749 (82 aa).

It belongs to the costars family.

This chain is Costars family protein v1g158749, found in Nematostella vectensis (Starlet sea anemone).